A 315-amino-acid polypeptide reads, in one-letter code: Olfactory receptor 4E1 (315 aa).

The Extracellular segment spans residues 1–33 (MEEAILLNQTSLVTYFRLRGLSVNHKARIAMFS). Asn8 carries N-linked (GlcNAc...) asparagine glycosylation. Residues 34 to 54 (MFLIFYVLTLIGNVLIVITII) form a helical membrane-spanning segment. Over 55–61 (YDHRLHT) the chain is Cytoplasmic. The chain crosses the membrane as a helical span at residues 62-82 (PMYFFLSNLSFIDVCHSTVTV). Residues 83–101 (PKMLRDVWSEEKLISFDAC) lie on the Extracellular side of the membrane. The cysteines at positions 101 and 183 are disulfide-linked. The helical transmembrane segment at 102–122 (VTQMFFLHLFACTEIFLLTVM) threads the bilayer. At 123-143 (AYDRYVAICKPLQYMIVMNWK) the chain is on the cytoplasmic side. A helical membrane pass occupies residues 144–164 (VCVLLAVALWTGGTIHSIALT). Topologically, residues 165–208 (SLTIKLPYCGPDEIDNFFCDVPQVIKLACIDTHVIEILIVSNSG) are extracellular. A helical membrane pass occupies residues 209 to 229 (LISVVCFVVLVVSYAVILVSL). The Cytoplasmic segment spans residues 230–240 (RQQISKGKRKA). A helical membrane pass occupies residues 241–261 (LSTCAAHLTVVTLFLGHCIFI). The Extracellular segment spans residues 262 to 272 (YSRPSTSLPED). Residues 273–293 (KVVSVFFTAVTPLLNPIIYTL) form a helical membrane-spanning segment. Topologically, residues 294–315 (RNEEMKSALNKLVGRKERKEEK) are cytoplasmic.

The protein belongs to the G-protein coupled receptor 1 family.

The protein localises to the cell membrane. Its function is as follows. Odorant receptor. This is Olfactory receptor 4E1 (OR4E1) from Homo sapiens (Human).